The chain runs to 547 residues: Chaperonin GroEL (547 aa).

ATP-binding positions include 30–33 (TLGP), Lys-51, 87–91 (DGTTT), Gly-415, and Asp-496. The interval 528–547 (KEEPMPMRGSGMGGMGGMDF) is disordered. Positions 537–547 (SGMGGMGGMDF) are enriched in gly residues.

The protein belongs to the chaperonin (HSP60) family. As to quaternary structure, forms a cylinder of 14 subunits composed of two heptameric rings stacked back-to-back. Interacts with the co-chaperonin GroES.

The protein resides in the cytoplasm. It catalyses the reaction ATP + H2O + a folded polypeptide = ADP + phosphate + an unfolded polypeptide.. Its function is as follows. Together with its co-chaperonin GroES, plays an essential role in assisting protein folding. The GroEL-GroES system forms a nano-cage that allows encapsulation of the non-native substrate proteins and provides a physical environment optimized to promote and accelerate protein folding. This Rickettsia canadensis (strain McKiel) protein is Chaperonin GroEL.